Consider the following 1002-residue polypeptide: Ephrin type-B receptor 5 (1002 aa).

The first 29 residues, 1–29, serve as a signal peptide directing secretion; that stretch reads MDSNADISARRVSGMDWLWLVCFFHLVTS. Topologically, residues 30 to 564 are extracellular; sequence LEEILLDTTG…AQDRLPLIVG (535 aa). Positions 31-213 constitute an Eph LBD domain; it reads EEILLDTTGE…FFYKCPAVVK (183 aa). 2 Fibronectin type-III domains span residues 344 to 452 and 453 to 548; these read APRD…TSQS and VPSA…TLMA. N-linked (GlcNAc...) asparagine glycosylation is present at asparagine 446. Residues 565–585 form a helical membrane-spanning segment; the sequence is SALGGLAFLVIAAIAILAIIF. The Cytoplasmic portion of the chain corresponds to 586-1002; that stretch reads KSKRRETPYT…HLNQLEPVEV (417 aa). Residues 637-900 enclose the Protein kinase domain; that stretch reads IKIEEVIGSG…QIVSALDKMI (264 aa). ATP contacts are provided by residues 643–651 and lysine 669; that span reads IGSGEFGEV. Aspartate 762 serves as the catalytic Proton acceptor. The disordered stretch occupies residues 906-928; it reads LKATGTGSSRPSQPLLSNSPPDF. Polar residues predominate over residues 910–928; sequence GTGSSRPSQPLLSNSPPDF. The 65-residue stretch at 929–993 folds into the SAM domain; that stretch reads PSLSNAHEWL…LNSIQLMKVH (65 aa). The short motif at 1000 to 1002 is the PDZ-binding element; the sequence is VEV.

The protein belongs to the protein kinase superfamily. Tyr protein kinase family. Ephrin receptor subfamily. In terms of tissue distribution, most abundant in thymus and detectable in brain, retina, kidney, lung and heart. Not detected in skeletal muscle and liver.

Its subcellular location is the membrane. The enzyme catalyses L-tyrosyl-[protein] + ATP = O-phospho-L-tyrosyl-[protein] + ADP + H(+). Its function is as follows. Receptor for members of the ephrin-B family. In Gallus gallus (Chicken), this protein is Ephrin type-B receptor 5 (EPHB5).